Here is a 217-residue protein sequence, read N- to C-terminus: MGQKVHPIGMRVGIIRDWDAKWYAEKEYADYLHEDLAIRKFINKELADASVSTIEIERAVNKVIVSLHTAKPGMVIGKGGANVDALRGQLNKLTGKQVHINIIEIKQPDLDAHLVGENIARQLEQRVAFRRAQKQAIQRTMRAGAKGIKTQVSGRLNGADIARAEGYSEGTVPLHTLRADIDYAWEEADTTYGKLGVKVWIYRGEVLPARKNTKGGK.

The 69-residue stretch at 38–106 (IRKFINKELA…QVHINIIEIK (69 aa)) folds into the KH type-2 domain.

This sequence belongs to the universal ribosomal protein uS3 family. Part of the 30S ribosomal subunit. Forms a tight complex with proteins S10 and S14.

Binds the lower part of the 30S subunit head. Binds mRNA in the 70S ribosome, positioning it for translation. This is Small ribosomal subunit protein uS3 from Streptococcus pyogenes serotype M6 (strain ATCC BAA-946 / MGAS10394).